The sequence spans 402 residues: Dual-specificity RNA methyltransferase RlmN (402 aa).

Glu94 (proton acceptor) is an active-site residue. The region spanning 100–351 (EDDRGTLCIS…ATVRKTRGDD (252 aa)) is the Radical SAM core domain. Cys107 and Cys356 are oxidised to a cystine. [4Fe-4S] cluster contacts are provided by Cys114, Cys118, and Cys121. Residues 182-183 (GE), Ser214, 236-238 (SLH), and Asn313 contribute to the S-adenosyl-L-methionine site. The active-site S-methylcysteine intermediate is the Cys356.

This sequence belongs to the radical SAM superfamily. RlmN family. Requires [4Fe-4S] cluster as cofactor.

Its subcellular location is the cytoplasm. The enzyme catalyses adenosine(2503) in 23S rRNA + 2 reduced [2Fe-2S]-[ferredoxin] + 2 S-adenosyl-L-methionine = 2-methyladenosine(2503) in 23S rRNA + 5'-deoxyadenosine + L-methionine + 2 oxidized [2Fe-2S]-[ferredoxin] + S-adenosyl-L-homocysteine. The catalysed reaction is adenosine(37) in tRNA + 2 reduced [2Fe-2S]-[ferredoxin] + 2 S-adenosyl-L-methionine = 2-methyladenosine(37) in tRNA + 5'-deoxyadenosine + L-methionine + 2 oxidized [2Fe-2S]-[ferredoxin] + S-adenosyl-L-homocysteine. Specifically methylates position 2 of adenine 2503 in 23S rRNA and position 2 of adenine 37 in tRNAs. m2A2503 modification seems to play a crucial role in the proofreading step occurring at the peptidyl transferase center and thus would serve to optimize ribosomal fidelity. The protein is Dual-specificity RNA methyltransferase RlmN of Polynucleobacter asymbioticus (strain DSM 18221 / CIP 109841 / QLW-P1DMWA-1) (Polynucleobacter necessarius subsp. asymbioticus).